Consider the following 143-residue polypeptide: Oxoglutarate dehydrogenase inhibitor (143 aa).

The residue at position 14 (Thr14) is a Phosphothreonine. In terms of domain architecture, FHA spans 68 to 117 (TTAGRHPESDIFLDDVTVSRRHAEFRINEGEFEVVDVGSLNGTYVNREPR).

Its subcellular location is the cytoplasm. In terms of biological role, an essential component of the PknG signaling pathway. When unphosphorylated, it inhibits the activity of 2-oxoglutarate dehydrogenase. When phosphorylated it does not inhibit 2-oxoglutarate dehydrogenase. This chain is Oxoglutarate dehydrogenase inhibitor (odhI), found in Corynebacterium glutamicum (strain ATCC 13032 / DSM 20300 / JCM 1318 / BCRC 11384 / CCUG 27702 / LMG 3730 / NBRC 12168 / NCIMB 10025 / NRRL B-2784 / 534).